Consider the following 676-residue polypeptide: Ion-translocating oxidoreductase complex subunit C (676 aa).

2 4Fe-4S ferredoxin-type domains span residues 369 to 397 (GEPQ…QQLY) and 407 to 436 (KATT…VQYF). Residues cysteine 377, cysteine 380, cysteine 383, cysteine 387, cysteine 416, cysteine 419, cysteine 422, and cysteine 426 each contribute to the [4Fe-4S] cluster site. Residues 600–652 (ARKLEQQQANAEPEQQVDPRKAAVEAAIARAKARKLEQQQANAEPEEQVDPRK) are disordered. Low complexity predominate over residues 605–615 (QQQANAEPEQQ).

The protein belongs to the 4Fe4S bacterial-type ferredoxin family. RnfC subfamily. The complex is composed of six subunits: RsxA, RsxB, RsxC, RsxD, RsxE and RsxG. The cofactor is [4Fe-4S] cluster.

The protein resides in the cell inner membrane. Part of a membrane-bound complex that couples electron transfer with translocation of ions across the membrane. Required to maintain the reduced state of SoxR. In Escherichia coli (strain SMS-3-5 / SECEC), this protein is Ion-translocating oxidoreductase complex subunit C.